We begin with the raw amino-acid sequence, 392 residues long: 4-hydroxy-3-methylbut-2-en-1-yl diphosphate synthase (flavodoxin) (392 aa).

Cysteine 280, cysteine 283, cysteine 315, and glutamate 322 together coordinate [4Fe-4S] cluster. Basic and acidic residues predominate over residues 371–380 (TEKGSDHCSE). Residues 371 to 392 (TEKGSDHCSETTRSGSPVVTVN) are disordered. The span at 381–392 (TTRSGSPVVTVN) shows a compositional bias: polar residues.

The protein belongs to the IspG family. [4Fe-4S] cluster serves as cofactor.

It carries out the reaction (2E)-4-hydroxy-3-methylbut-2-enyl diphosphate + oxidized [flavodoxin] + H2O + 2 H(+) = 2-C-methyl-D-erythritol 2,4-cyclic diphosphate + reduced [flavodoxin]. It functions in the pathway isoprenoid biosynthesis; isopentenyl diphosphate biosynthesis via DXP pathway; isopentenyl diphosphate from 1-deoxy-D-xylulose 5-phosphate: step 5/6. Its function is as follows. Converts 2C-methyl-D-erythritol 2,4-cyclodiphosphate (ME-2,4cPP) into 1-hydroxy-2-methyl-2-(E)-butenyl 4-diphosphate. The polypeptide is 4-hydroxy-3-methylbut-2-en-1-yl diphosphate synthase (flavodoxin) (Mycobacterium leprae (strain Br4923)).